Reading from the N-terminus, the 327-residue chain is Tartrate-resistant acid phosphatase type 5 (327 aa).

An N-terminal signal peptide occupies residues 1-22; it reads MDSWVVLLGLQIIWLPLLTHGT. Residues aspartate 35, aspartate 73, tyrosine 76, and asparagine 112 each contribute to the Fe cation site. Residues asparagine 118 and asparagine 149 are each glycosylated (N-linked (GlcNAc...) asparagine). Cysteine 163 and cysteine 221 form a disulfide bridge. Histidine 207, histidine 242, and histidine 244 together coordinate Fe cation.

Exists either as monomer or, after proteolytic processing, as a dimer of two chains linked by disulfide bond(s). The cofactor is Fe cation. In terms of tissue distribution, characteristic constituent of osteoclasts.

It is found in the lysosome. The catalysed reaction is a phosphate monoester + H2O = an alcohol + phosphate. In terms of biological role, may play a role in the process of bone resorption. The osteoclastic trap acts on nucleotide tri- and diphosphates with higher affinity, compared with other substrates. This chain is Tartrate-resistant acid phosphatase type 5 (Acp5), found in Mus musculus (Mouse).